Consider the following 140-residue polypeptide: Large-conductance mechanosensitive channel 3 (140 aa).

A run of 3 helical transmembrane segments spans residues 8–28 (FISKGNVMDLAVGVIIGAAFG), 30–50 (IVTSLVDDVIMPIFGAIFGGL), and 81–101 (GSFITAVLNFLILAFIIFLMV).

It belongs to the MscL family. In terms of assembly, homopentamer.

The protein localises to the cell inner membrane. Channel that opens in response to stretch forces in the membrane lipid bilayer. May participate in the regulation of osmotic pressure changes within the cell. The sequence is that of Large-conductance mechanosensitive channel 3 from Mesorhizobium japonicum (strain LMG 29417 / CECT 9101 / MAFF 303099) (Mesorhizobium loti (strain MAFF 303099)).